The chain runs to 502 residues: Keratin, type II microfibrillar, component 5 (502 aa).

Ser-1 carries the blocked amino end (Ser) modification. The tract at residues 1–122 (SCRSYRISPG…PNAQCVKHQE (122 aa)) is head. Positions 122–433 (EKEQIKNLNS…RLLEGEEQRL (312 aa)) constitute an IF rod domain. Positions 123–157 (KEQIKNLNSRFAAFIDKVRFLEQQNKLLETKWQFY) are coil 1A. The interval 158-167 (QNQRCCESNL) is linker 1. Positions 168 to 268 (EPLFNGYIET…YDEEIQILNA (101 aa)) are coil 1B. A Glycyl lysine isopeptide (Lys-Gly) (interchain with G-Cter in SUMO1) cross-link involves residue Lys-228. The segment at 269-285 (HISDTSVIVKMDNSRDL) is linker 12. Residues 286–429 (NMDCVVAEIK…ATYRRLLEGE (144 aa)) are coil 2. The interval 430–502 (EQRLCEGVGS…CGSSRSVRFA (73 aa)) is tail.

Belongs to the intermediate filament family. In terms of tissue distribution, hard keratin wool.

In terms of biological role, wool microfibrillar keratin. The protein is Keratin, type II microfibrillar, component 5 of Ovis aries (Sheep).